The sequence spans 243 residues: Thiocyanate hydrolase subunit gamma (243 aa).

Residues cysteine 128, cysteine 131, serine 132, and cysteine 133 each contribute to the Co(3+) site. The residue at position 131 (cysteine 131) is a Cysteine sulfinic acid (-SO2H). A Cysteine sulfenic acid (-SOH) modification is found at cysteine 133.

Belongs to the nitrile hydratase subunit alpha family. As to quaternary structure, heterododecamer consisting of 4 alpha, 4 beta, and 4 gamma subunits. Co(3+) serves as cofactor.

The enzyme catalyses thiocyanate + H2O + 2 H(+) = carbonyl sulfide + NH4(+). The protein operates within organosulfur degradation; thiocyanate degradation. In terms of biological role, involved in the degradation of thiocyanate. The sequence is that of Thiocyanate hydrolase subunit gamma (scnC) from Thiobacillus thioparus.